A 757-amino-acid chain; its full sequence is Endonuclease MutS2 (757 aa).

Residue 321 to 328 (GPNMGGKT) coordinates ATP. Residues 681–756 (IDIRGMTVEE…GTGVTVVEVK (76 aa)) enclose the Smr domain.

This sequence belongs to the DNA mismatch repair MutS family. MutS2 subfamily. As to quaternary structure, homodimer. Binds to stalled ribosomes, contacting rRNA.

Functionally, endonuclease that is involved in the suppression of homologous recombination and thus may have a key role in the control of bacterial genetic diversity. Its function is as follows. Acts as a ribosome collision sensor, splitting the ribosome into its 2 subunits. Detects stalled/collided 70S ribosomes which it binds and splits by an ATP-hydrolysis driven conformational change. Acts upstream of the ribosome quality control system (RQC), a ribosome-associated complex that mediates the extraction of incompletely synthesized nascent chains from stalled ribosomes and their subsequent degradation. Probably generates substrates for RQC. The polypeptide is Endonuclease MutS2 (Thermotoga sp. (strain RQ2)).